Consider the following 148-residue polypeptide: Calmodulin-related protein 97A (148 aa).

4 consecutive EF-hand domains span residues 7 to 42 (EQIAEFKDAFVQFDKEGTGKIATRELGTLMRTLGQN), 43 to 78 (PTEAELQDLIAEAENNNNGQLNFTEFCGIMAKQMRE), 80 to 115 (DTEEEMREAFKIFDRDGDGFISPAELRFVMINLGEK), and 116 to 148 (VTDEEIDEMIREADFDGDGMINYEEFVWMISQK). D20, T24, K26, E31, N58, N60, Q62, E67, D93, D95, D97, E104, D129, D131, D133, M135, and E140 together coordinate Ca(2+).

It belongs to the calmodulin family.

In terms of biological role, may be involved in calcium-mediated signal transduction. In Drosophila melanogaster (Fruit fly), this protein is Calmodulin-related protein 97A (Acam).